The following is a 264-amino-acid chain: Signal peptidase I (264 aa).

Over 1–18 (MNRDNINSNKTVKQEFGS) the chain is Cytoplasmic. The helical transmembrane segment at 19–39 (FAFVICIALVIRILIMEPFTV) threads the bilayer. The Extracellular segment spans residues 40 to 264 (PTGSMKATIL…IFKNLYNVDE (225 aa)). Active-site residues include S43 and K106.

It belongs to the peptidase S26 family.

It localises to the cell membrane. The enzyme catalyses Cleavage of hydrophobic, N-terminal signal or leader sequences from secreted and periplasmic proteins.. This Rickettsia prowazekii (strain Madrid E) protein is Signal peptidase I (lepB).